The following is a 764-amino-acid chain: FHF complex subunit HOOK interacting protein 2A (764 aa).

The interval 190-236 is disordered; it reads SEDGPKGQDPGSGDVSQCQQPQELSGATGVEPTESEEEPPHQMDDLS. Residues 203 to 214 show a composition bias toward polar residues; it reads DVSQCQQPQELS.

It belongs to the FHIP family.

In terms of biological role, may be required for proper functioning of the nervous system. The chain is FHF complex subunit HOOK interacting protein 2A from Mus musculus (Mouse).